Here is a 200-residue protein sequence, read N- to C-terminus: Large ribosomal subunit protein uL4 (200 aa).

Residues 38 to 68 (GRQGSKQQKTRSDVRGGGKRPWRQKGTGRAR) are disordered. Over residues 54-65 (GGKRPWRQKGTG) the composition is skewed to basic residues.

This sequence belongs to the universal ribosomal protein uL4 family. Part of the 50S ribosomal subunit.

One of the primary rRNA binding proteins, this protein initially binds near the 5'-end of the 23S rRNA. It is important during the early stages of 50S assembly. It makes multiple contacts with different domains of the 23S rRNA in the assembled 50S subunit and ribosome. Its function is as follows. Forms part of the polypeptide exit tunnel. This chain is Large ribosomal subunit protein uL4, found in Pseudomonas fluorescens (strain SBW25).